The chain runs to 1479 residues: Chromosome partition protein MukB (1479 aa).

34 to 41 serves as a coordination point for ATP; the sequence is GGNGAGKS. Coiled-coil stretches lie at residues 337 to 418, 511 to 604, 780 to 810, 847 to 1116, and 1206 to 1265; these read LNLV…QYQQ, QAER…APVW, RAAR…DVQK, ELDR…AKAG, and DDPV…LQAV. The segment at 666-783 is flexible hinge; that stretch reads PGGSEDPRLN…EVPLFGRAAR (118 aa).

It belongs to the SMC family. MukB subfamily. As to quaternary structure, homodimerization via its hinge domain. Binds to DNA via its C-terminal region. Interacts, and probably forms a ternary complex, with MukE and MukF via its C-terminal region. The complex formation is stimulated by calcium or magnesium. Interacts with tubulin-related protein FtsZ.

Its subcellular location is the cytoplasm. It is found in the nucleoid. Its function is as follows. Plays a central role in chromosome condensation, segregation and cell cycle progression. Functions as a homodimer, which is essential for chromosome partition. Involved in negative DNA supercoiling in vivo, and by this means organize and compact chromosomes. May achieve or facilitate chromosome segregation by condensation DNA from both sides of a centrally located replisome during cell division. The chain is Chromosome partition protein MukB from Pectobacterium atrosepticum (strain SCRI 1043 / ATCC BAA-672) (Erwinia carotovora subsp. atroseptica).